A 433-amino-acid chain; its full sequence is F-box/kelch-repeat protein At1g24800 (433 aa).

Residues 23–71 (TSMCDLPPKLVGEKILTRIPITSLRAVRSTCKLWNALTKDRVLGKAAAQ) form the F-box domain. 2 Kelch repeats span residues 170–216 (HKIL…LYGV) and 286–337 (VLYH…RFDN).

This chain is F-box/kelch-repeat protein At1g24800, found in Arabidopsis thaliana (Mouse-ear cress).